A 252-amino-acid chain; its full sequence is Membrane protein insertase YidC (252 aa).

The N-terminal stretch at 1 to 19 (MKKVLWIIIIILMVGALAG) is a signal peptide. C20 carries N-palmitoyl cysteine lipidation. Residue C20 is the site of S-diacylglycerol cysteine attachment. Helical transmembrane passes span 34 to 54 (IWNH…ADLL), 58 to 78 (FGLS…PLMI), 131 to 151 (MAGC…YFAI), 162 to 182 (FLWF…VAGI), 201 to 221 (VIIY…PSAL), and 223 to 243 (LYWV…VVRF).

The protein belongs to the OXA1/ALB3/YidC family. Type 2 subfamily.

The protein localises to the cell membrane. In terms of biological role, required for the insertion and/or proper folding and/or complex formation of integral membrane proteins into the membrane. Involved in integration of membrane proteins that insert both dependently and independently of the Sec translocase complex, as well as at least some lipoproteins. The chain is Membrane protein insertase YidC from Alkalihalophilus pseudofirmus (strain ATCC BAA-2126 / JCM 17055 / OF4) (Bacillus pseudofirmus).